The chain runs to 340 residues: Uroporphyrinogen decarboxylase (340 aa).

Substrate-binding positions include 21-25 (RQAGR), Phe-40, Asp-71, Tyr-148, Ser-203, and His-316.

This sequence belongs to the uroporphyrinogen decarboxylase family. As to quaternary structure, homodimer.

It is found in the cytoplasm. The catalysed reaction is uroporphyrinogen III + 4 H(+) = coproporphyrinogen III + 4 CO2. Its pathway is porphyrin-containing compound metabolism; protoporphyrin-IX biosynthesis; coproporphyrinogen-III from 5-aminolevulinate: step 4/4. In terms of biological role, catalyzes the decarboxylation of four acetate groups of uroporphyrinogen-III to yield coproporphyrinogen-III. The sequence is that of Uroporphyrinogen decarboxylase from Campylobacter jejuni subsp. jejuni serotype O:2 (strain ATCC 700819 / NCTC 11168).